A 457-amino-acid chain; its full sequence is Keratin, type II cytoskeletal 7 (457 aa).

Ser-2 is subject to N-acetylserine. At Ser-2 the chain carries Phosphoserine. The tract at residues 2 to 84 is head; that stretch reads SIHFSSRSTA…DPTIQQVRQE (83 aa). The O-linked (GlcNAc) serine glycan is linked to Ser-7. The residue at position 15 (Arg-15) is a Dimethylated arginine; alternate. Arg-15 carries the post-translational modification Omega-N-methylarginine; alternate. A phosphoserine mark is found at Ser-47 and Ser-65. The tract at residues 84–120 is coil 1A; that stretch reads EEREQIKTLNNKFASFIDKVRFLEQQNKMLETKWALL. The region spanning 85–397 is the IF rod domain; it reads EREQIKTLNN…KLLEGEESRL (313 aa). Thr-91 carries the phosphothreonine modification. A linker 1 region spans residues 121–138; sequence QEQKSAKSSQLPRIFEAQ. Residue Lys-124 forms a Glycyl lysine isopeptide (Lys-Gly) (interchain with G-Cter in SUMO2) linkage. The tract at residues 139–230 is coil 1B; that stretch reads IAGLRQQLET…TLHETELAEL (92 aa). Lys-173 carries the N6-acetyllysine modification. Residues Ser-211, Ser-246, and Ser-248 each carry the phosphoserine modification. The tract at residues 231-254 is linker 12; it reads QSQISDTSVVLSMDNSRSLDLDGI. The segment at 255–393 is coil 2; that stretch reads IADVKAQYEE…ATYRKLLEGE (139 aa). Residues Lys-259 and Lys-280 each participate in a glycyl lysine isopeptide (Lys-Gly) (interchain with G-Cter in SUMO2) cross-link. Position 283 is a phosphothreonine (Thr-283). Glycyl lysine isopeptide (Lys-Gly) (interchain with G-Cter in SUMO2) cross-links involve residues Lys-290 and Lys-325. The segment at 394–457 is tail; the sequence is ESRLSGDGMG…TSTTRRGTHN (64 aa).

This sequence belongs to the intermediate filament family. Heterotetramer of two type I and two type II keratins. Interacts with eukaryotic translation initiator factor 3 (eIF3) subunit EIF3S10. Interacts with GPER1. In terms of processing, arg-15 is dimethylated, probably to asymmetric dimethylarginine. In terms of tissue distribution, expressed in most simple epithelia tested including liver, lactating mammary gland, lung, kidney, stomach, duodenum, colon, oviduct, uterus, pancreas, epididymis, prostate, preputial gland and mesothelium, and in most stratified epithelia tested including dorsal skin, paw/toe, tail, tongue, cervix, forestomach, and bladder. Also expressed in Henle layer of the inner root sheath of whisker follicle.

Functionally, blocks interferon-dependent interphase and stimulates DNA synthesis in cells. The protein is Keratin, type II cytoskeletal 7 of Mus musculus (Mouse).